The chain runs to 271 residues: Formamidopyrimidine-DNA glycosylase (271 aa).

P2 functions as the Schiff-base intermediate with DNA in the catalytic mechanism. E3 (proton donor) is an active-site residue. Residue K58 is the Proton donor; for beta-elimination activity of the active site. DNA is bound by residues H91, R110, and R152. An FPG-type zinc finger spans residues 237 to 271 (RVYDRAGQPCRVCGEPIRCVRLGQRATYYCPRCQR). The active-site Proton donor; for delta-elimination activity is R261.

It belongs to the FPG family. As to quaternary structure, monomer. Zn(2+) serves as cofactor.

It carries out the reaction Hydrolysis of DNA containing ring-opened 7-methylguanine residues, releasing 2,6-diamino-4-hydroxy-5-(N-methyl)formamidopyrimidine.. The enzyme catalyses 2'-deoxyribonucleotide-(2'-deoxyribose 5'-phosphate)-2'-deoxyribonucleotide-DNA = a 3'-end 2'-deoxyribonucleotide-(2,3-dehydro-2,3-deoxyribose 5'-phosphate)-DNA + a 5'-end 5'-phospho-2'-deoxyribonucleoside-DNA + H(+). Its function is as follows. Involved in base excision repair of DNA damaged by oxidation or by mutagenic agents. Acts as a DNA glycosylase that recognizes and removes damaged bases. Has a preference for oxidized purines, such as 7,8-dihydro-8-oxoguanine (8-oxoG). Has AP (apurinic/apyrimidinic) lyase activity and introduces nicks in the DNA strand. Cleaves the DNA backbone by beta-delta elimination to generate a single-strand break at the site of the removed base with both 3'- and 5'-phosphates. This is Formamidopyrimidine-DNA glycosylase from Methylococcus capsulatus (strain ATCC 33009 / NCIMB 11132 / Bath).